The following is a 1053-amino-acid chain: Putative ABC transporter C family member 15 (1053 aa).

The ABC transmembrane type-1 1 domain maps to 1–180; that stretch reads MSVDVQRITD…LPDLLSALVQ (180 aa). 4 consecutive transmembrane segments (helical) span residues 11-31, 36-56, 125-145, and 151-171; these read FIWY…AIYI, LGLG…CNYP, FILW…CMLM, and AGAV…IFGL. Residues 214 to 437 form the ABC transporter 1 domain; sequence VEIENGAFSW…NIGFEVLTQC (224 aa). 249-256 contributes to the ATP binding site; the sequence is GAVGSGKS. 5 consecutive transmembrane segments (helical) span residues 481–503, 523–543, 595–615, 714–734, and 738–758; these read LLVP…SNYW, ILLV…ARTI, MAVK…TIFV, LSHF…EGVI, and IAGL…TVIW. The 283-residue stretch at 483-765 folds into the ABC transmembrane type-1 2 domain; that stretch reads VPFIILAQSC…VIWNICNAEN (283 aa). The ABC transporter 2 domain maps to 804 to 1036; the sequence is FRDLQVRYAE…EDSFFSKLIK (233 aa). 836 to 843 contributes to the ATP binding site; sequence GRTGSGKS.

It belongs to the ABC transporter superfamily. ABCC family. Conjugate transporter (TC 3.A.1.208) subfamily.

The protein localises to the membrane. It carries out the reaction ATP + H2O + xenobioticSide 1 = ADP + phosphate + xenobioticSide 2.. Pump for glutathione S-conjugates. The chain is Putative ABC transporter C family member 15 (ABCC15) from Arabidopsis thaliana (Mouse-ear cress).